The following is an 876-amino-acid chain: Valine--tRNA ligase (876 aa).

Positions 44 to 54 match the 'HIGH' region motif; that stretch reads PNVTGKLHLGH. The short motif at 520–524 is the 'KMSKS' region element; that stretch reads KMSKS. Residue Lys523 coordinates ATP. A coiled-coil region spans residues 805–876; it reads LEGLIDMDKE…VKARIEQLKA (72 aa).

The protein belongs to the class-I aminoacyl-tRNA synthetase family. ValS type 1 subfamily. In terms of assembly, monomer.

It is found in the cytoplasm. The enzyme catalyses tRNA(Val) + L-valine + ATP = L-valyl-tRNA(Val) + AMP + diphosphate. In terms of biological role, catalyzes the attachment of valine to tRNA(Val). As ValRS can inadvertently accommodate and process structurally similar amino acids such as threonine, to avoid such errors, it has a 'posttransfer' editing activity that hydrolyzes mischarged Thr-tRNA(Val) in a tRNA-dependent manner. This chain is Valine--tRNA ligase, found in Staphylococcus aureus (strain bovine RF122 / ET3-1).